Here is a 199-residue protein sequence, read N- to C-terminus: NAD(P)H dehydrogenase (quinone) (199 aa).

The Flavodoxin-like domain occupies V4–V190. Residues S10–I15 and T78–F80 contribute to the FMN site. Y12 is a binding site for NAD(+). Residue W98 participates in substrate binding. FMN is bound by residues S113–G119 and H134.

Belongs to the WrbA family. It depends on FMN as a cofactor.

It carries out the reaction a quinone + NADH + H(+) = a quinol + NAD(+). The catalysed reaction is a quinone + NADPH + H(+) = a quinol + NADP(+). This chain is NAD(P)H dehydrogenase (quinone), found in Methylocella silvestris (strain DSM 15510 / CIP 108128 / LMG 27833 / NCIMB 13906 / BL2).